Consider the following 536-residue polypeptide: Apolipoprotein N-acyltransferase (536 aa).

7 consecutive transmembrane segments (helical) span residues 10 to 30 (IASG…LLAG), 42 to 62 (AWPV…GSAA), 76 to 96 (WWFG…AFLV), 107 to 127 (AAIC…FALA), 136 to 158 (LRIL…LLTG), 181 to 201 (IGIW…AVLI), and 212 to 232 (AVPA…GIRL). The CN hydrolase domain maps to 248-501 (MQPNLPQDAR…EGVLDSGLPA (254 aa)). Glu-295 serves as the catalytic Proton acceptor. The active site involves Lys-360. Cys-413 acts as the Nucleophile in catalysis. The chain crosses the membrane as a helical span at residues 509 to 529 (ARVGELPAAVLVALVMMLVLL).

Belongs to the CN hydrolase family. Apolipoprotein N-acyltransferase subfamily.

Its subcellular location is the cell inner membrane. It catalyses the reaction N-terminal S-1,2-diacyl-sn-glyceryl-L-cysteinyl-[lipoprotein] + a glycerophospholipid = N-acyl-S-1,2-diacyl-sn-glyceryl-L-cysteinyl-[lipoprotein] + a 2-acyl-sn-glycero-3-phospholipid + H(+). The protein operates within protein modification; lipoprotein biosynthesis (N-acyl transfer). Its function is as follows. Catalyzes the phospholipid dependent N-acylation of the N-terminal cysteine of apolipoprotein, the last step in lipoprotein maturation. This Rhodopseudomonas palustris (strain ATCC BAA-98 / CGA009) protein is Apolipoprotein N-acyltransferase.